Here is a 386-residue protein sequence, read N- to C-terminus: uncharacterized protein (386 aa).

Positions 355 to 386 (PSEAQKVQVKSNKKPPIAPKPEHLKKRDHGLC) are disordered. Residues 377 to 386 (HLKKRDHGLC) are compositionally biased toward basic residues.

This is an uncharacterized protein from Rickettsia prowazekii (strain Madrid E).